Reading from the N-terminus, the 132-residue chain is Small ribosomal subunit protein uS8 (132 aa).

It belongs to the universal ribosomal protein uS8 family. As to quaternary structure, part of the 30S ribosomal subunit. Contacts proteins S5 and S12.

In terms of biological role, one of the primary rRNA binding proteins, it binds directly to 16S rRNA central domain where it helps coordinate assembly of the platform of the 30S subunit. This is Small ribosomal subunit protein uS8 from Treponema pallidum (strain Nichols).